The following is a 93-amino-acid chain: Small ribosomal subunit protein uS19 (93 aa).

It belongs to the universal ribosomal protein uS19 family.

Its function is as follows. Protein S19 forms a complex with S13 that binds strongly to the 16S ribosomal RNA. The polypeptide is Small ribosomal subunit protein uS19 (Campylobacter concisus (strain 13826)).